Consider the following 120-residue polypeptide: Cytochrome c oxidase subunit 5 (120 aa).

Ser-2 is subject to Blocked amino end (Ser). Cys-76, His-84, Cys-99, and Cys-102 together coordinate Zn(2+).

Belongs to the cytochrome c oxidase subunit 5B family. As to quaternary structure, component of the cytochrome c oxidase (complex IV, CIV), a multisubunit enzyme composed of a catalytic core of 3 subunits and several supernumerary subunits. The complex exists as a monomer or a dimer and forms supercomplexes (SCs) in the inner mitochondrial membrane with ubiquinol-cytochrome c oxidoreductase (cytochrome b-c1 complex, complex III, CIII). Slime mold cytochrome c oxidase consists of at least seven different polypeptides species, subunits I, II, III, IV, V, VI, and VIIe/s in order of MW.

It localises to the mitochondrion inner membrane. It functions in the pathway energy metabolism; oxidative phosphorylation. Its function is as follows. Component of the cytochrome c oxidase, the last enzyme in the mitochondrial electron transport chain which drives oxidative phosphorylation. The respiratory chain contains 3 multisubunit complexes succinate dehydrogenase (complex II, CII), ubiquinol-cytochrome c oxidoreductase (cytochrome b-c1 complex, complex III, CIII) and cytochrome c oxidase (complex IV, CIV), that cooperate to transfer electrons derived from NADH and succinate to molecular oxygen, creating an electrochemical gradient over the inner membrane that drives transmembrane transport and the ATP synthase. Cytochrome c oxidase is the component of the respiratory chain that catalyzes the reduction of oxygen to water. Electrons originating from reduced cytochrome c in the intermembrane space (IMS) are transferred via the dinuclear copper A center (CU(A)) of subunit 2 and heme A of subunit 1 to the active site in subunit 1, a binuclear center (BNC) formed by heme A3 and copper B (CU(B)). The BNC reduces molecular oxygen to 2 water molecules using 4 electrons from cytochrome c in the IMS and 4 protons from the mitochondrial matrix. In Dictyostelium discoideum (Social amoeba), this protein is Cytochrome c oxidase subunit 5 (cxeA).